The sequence spans 193 residues: Peptidyl-tRNA hydrolase (193 aa).

His17 provides a ligand contact to tRNA. The active-site Proton acceptor is the His22. Positions 68, 70, and 116 each coordinate tRNA.

It belongs to the PTH family. As to quaternary structure, monomer.

The protein localises to the cytoplasm. It catalyses the reaction an N-acyl-L-alpha-aminoacyl-tRNA + H2O = an N-acyl-L-amino acid + a tRNA + H(+). Functionally, hydrolyzes ribosome-free peptidyl-tRNAs (with 1 or more amino acids incorporated), which drop off the ribosome during protein synthesis, or as a result of ribosome stalling. Its function is as follows. Catalyzes the release of premature peptidyl moieties from peptidyl-tRNA molecules trapped in stalled 50S ribosomal subunits, and thus maintains levels of free tRNAs and 50S ribosomes. This chain is Peptidyl-tRNA hydrolase, found in Xanthomonas campestris pv. campestris (strain 8004).